Here is a 224-residue protein sequence, read N- to C-terminus: Orotate phosphoribosyltransferase (224 aa).

Residues Lys-26, 73-74 (YK), Arg-100, Lys-101, Lys-104, His-106, and 127-135 (EDVTTSGKS) each bind 5-phospho-alpha-D-ribose 1-diphosphate. Residues Thr-131 and Arg-160 each coordinate orotate.

It belongs to the purine/pyrimidine phosphoribosyltransferase family. PyrE subfamily. In terms of assembly, homodimer. Mg(2+) serves as cofactor.

The enzyme catalyses orotidine 5'-phosphate + diphosphate = orotate + 5-phospho-alpha-D-ribose 1-diphosphate. It functions in the pathway pyrimidine metabolism; UMP biosynthesis via de novo pathway; UMP from orotate: step 1/2. In terms of biological role, catalyzes the transfer of a ribosyl phosphate group from 5-phosphoribose 1-diphosphate to orotate, leading to the formation of orotidine monophosphate (OMP). The protein is Orotate phosphoribosyltransferase of Clostridium botulinum (strain Eklund 17B / Type B).